The primary structure comprises 337 residues: Tryptophan--tRNA ligase 2 (337 aa).

Residues 13–15 and 22–23 each bind ATP; these read QPT and GN. Positions 14-23 match the 'HIGH' region motif; it reads PTAGSFHLGN. Asp-139 is an L-tryptophan binding site. Residues 151–153, Ile-190, and 199–203 contribute to the ATP site; these read GED and KMSKS. Residues 199-203 carry the 'KMSKS' region motif; that stretch reads KMSKS.

This sequence belongs to the class-I aminoacyl-tRNA synthetase family. In terms of assembly, homodimer.

Its subcellular location is the cytoplasm. The catalysed reaction is tRNA(Trp) + L-tryptophan + ATP = L-tryptophyl-tRNA(Trp) + AMP + diphosphate + H(+). Functionally, catalyzes the attachment of tryptophan to tRNA(Trp). The protein is Tryptophan--tRNA ligase 2 of Streptomyces avermitilis (strain ATCC 31267 / DSM 46492 / JCM 5070 / NBRC 14893 / NCIMB 12804 / NRRL 8165 / MA-4680).